We begin with the raw amino-acid sequence, 198 residues long: Superoxide dismutase [Mn], mitochondrial (198 aa).

Residue H26 coordinates Mn(2+). Y34 carries the 3'-nitrotyrosine modification. An N6-acetyllysine; alternate mark is found at K44 and K51. N6-succinyllysine; alternate is present on residues K44 and K51. Residue H74 coordinates Mn(2+). N6-acetyllysine is present on K90. N6-acetyllysine; alternate occurs at positions 98 and 106. N6-succinyllysine; alternate is present on residues K98 and K106. The Mn(2+) site is built by D159 and H163. N6-acetyllysine is present on K178.

Belongs to the iron/manganese superoxide dismutase family. As to quaternary structure, homotetramer. Mn(2+) serves as cofactor. Nitrated under oxidative stress. Nitration coupled with oxidation inhibits the catalytic activity. In terms of processing, acetylation at Lys-98 decreases enzymatic activity. Deacetylated by SIRT3 upon exposure to ionizing radiations or after long fasting. Post-translationally, polyubiquitinated; leading to proteasomal degradation. Deubiquitinated by USP36 which increases protein stability.

It localises to the mitochondrion matrix. The catalysed reaction is 2 superoxide + 2 H(+) = H2O2 + O2. In terms of biological role, destroys superoxide anion radicals which are normally produced within the cells and which are toxic to biological systems. The sequence is that of Superoxide dismutase [Mn], mitochondrial (SOD2) from Pan troglodytes (Chimpanzee).